A 218-amino-acid polypeptide reads, in one-letter code: Adenylate kinase (218 aa).

11–16 (GAGKGT) provides a ligand contact to ATP. Residues 31 to 60 (STGDMFREAMANKTKVGLEAKSYIDKGNLV) form an NMP region. Residues Thr-32, Arg-37, 58-60 (NLV), 86-89 (GFPR), and Gln-93 contribute to the AMP site. Residues 127–165 (ARYMCKNCGATYNKLSKQPKVEGTCDRCGSHEFYQREDD) form an LID region. Arg-128 contributes to the ATP binding site. Zn(2+) contacts are provided by Cys-131 and Cys-134. 137-138 (TY) is an ATP binding site. Residues Cys-151 and Cys-154 each coordinate Zn(2+). 2 residues coordinate AMP: Arg-162 and Arg-173. Gln-201 contributes to the ATP binding site.

The protein belongs to the adenylate kinase family. As to quaternary structure, monomer.

Its subcellular location is the cytoplasm. It carries out the reaction AMP + ATP = 2 ADP. The protein operates within purine metabolism; AMP biosynthesis via salvage pathway; AMP from ADP: step 1/1. Functionally, catalyzes the reversible transfer of the terminal phosphate group between ATP and AMP. Plays an important role in cellular energy homeostasis and in adenine nucleotide metabolism. This is Adenylate kinase from Lactobacillus helveticus (strain DPC 4571).